A 306-amino-acid chain; its full sequence is Glutamyl-Q tRNA(Asp) synthetase (306 aa).

Residues 29 to 33 (RFAPS) and D65 contribute to the L-glutamate site. A 'HIGH' region motif is present at residues 32 to 42 (PSPTGPLHLGN). C121, C123, Y141, and C145 together coordinate Zn(2+). Residues Y188 and R206 each contribute to the L-glutamate site. The 'KMSKS' region motif lies at 244–248 (KLAKR). K247 lines the ATP pocket.

It belongs to the class-I aminoacyl-tRNA synthetase family. GluQ subfamily. Zn(2+) is required as a cofactor.

Functionally, catalyzes the tRNA-independent activation of glutamate in presence of ATP and the subsequent transfer of glutamate onto a tRNA(Asp). Glutamate is transferred on the 2-amino-5-(4,5-dihydroxy-2-cyclopenten-1-yl) moiety of the queuosine in the wobble position of the QUC anticodon. The polypeptide is Glutamyl-Q tRNA(Asp) synthetase (Prochlorococcus marinus (strain MIT 9313)).